Reading from the N-terminus, the 438-residue chain is MNLKKTENALSLTLKNFIKSESFGGIFLFLNAVLAMVVANSFLKESYFALWHTPFGFQVGDFFIGFSLHNWIDDVLMALFFLMIGLEIKRELLFGELSSFKKASFPVIAAIGGMIAPGLIYFFLNANTPSQHGFGIPMATDIAFALGVIMLLGKRVPTALKVFLITLAVADDLGAIVVIALFYTTNLKFAWLLGALGVVLVLAILNRLNIRSLIPYLLLGVLLWFCVHQSGIHATIAAVVLAFMIPVKIPKDSKNVELLELGKRYAETSSGVLLTKEQQEILHSIEEKASALQSPLERLEHFLAPISGYFIMPLFAFANAGVSVDSSINLEVDKVLLGVILGLCLGKPLGIFLITFISEKLKITARPKGIGWWHILGAGLLAGIGFTMSMFISNLAFTSEHKDAMEVAKIAILLGSLISGIIGALYLFALDKRAALKK.

A run of 11 helical transmembrane segments spans residues 23-43 (FGGI…NSFL), 62-82 (FFIG…LFFL), 104-124 (SFPV…YFFL), 133-153 (GFGI…MLLG), 162-182 (VFLI…IALF), 185-205 (TNLK…LAIL), 212-232 (SLIP…QSGI), 302-322 (FLAP…NAGV), 337-357 (LGVI…ITFI), 372-392 (WWHI…SMFI), and 410-430 (IAIL…LFAL).

This sequence belongs to the NhaA Na(+)/H(+) (TC 2.A.33) antiporter family.

Its subcellular location is the cell inner membrane. The catalysed reaction is Na(+)(in) + 2 H(+)(out) = Na(+)(out) + 2 H(+)(in). Its function is as follows. Na(+)/H(+) antiporter that extrudes sodium in exchange for external protons. In Helicobacter pylori (strain J99 / ATCC 700824) (Campylobacter pylori J99), this protein is Na(+)/H(+) antiporter NhaA.